A 147-amino-acid chain; its full sequence is Transthyretin (147 aa).

The N-terminal stretch at 1-20 (MASFRLLLLCLAGLVFVSEA) is a signal peptide. Cysteine 30 carries the post-translational modification Sulfocysteine. Lysine 35 serves as a coordination point for L-thyroxine. 4-carboxyglutamate is present on glutamate 62. Serine 72 carries the post-translational modification Phosphoserine. Residue glutamate 74 participates in L-thyroxine binding. An N-linked (GlcNAc...) asparagine glycan is attached at asparagine 118. Residue serine 137 coordinates L-thyroxine.

It belongs to the transthyretin family. In terms of assembly, homotetramer. Dimer of dimers. In the homotetramer, subunits assemble around a central channel that can accommodate two ligand molecules. Interacts with RBP4. Sulfonation of the reactive cysteine Cys-30 enhances the stability of the native conformation of TTR, avoiding misassembly of the protein leading to amyloid formation. Highly expressed in the choroid plexus.

The protein resides in the secreted. Thyroid hormone-binding protein. Probably transports thyroxine from the bloodstream to the brain. The chain is Transthyretin (TTR) from Ovis aries (Sheep).